The primary structure comprises 458 residues: L-hydantoinase (458 aa).

His60, His62, Lys147, His183, His239, and Asp312 together coordinate Zn(2+). N6-carboxylysine is present on Lys147.

Homotetramer. Zn(2+) serves as cofactor. Carboxylation allows a single lysine to coordinate two zinc ions.

Its function is as follows. Rather more predominant for the cleavage of aryl- than for alkyl-hydantoin derivatives. The stereoselectivity of this enzyme depends on the substrate used for bioconversion: strictly L-selective for the cleavage of D,L-5-indolylmethylhydantoin, but D-selective for the hydrolysis of D,L-methylthioethylhydantoin. This is L-hydantoinase (lhyD) from Paenarthrobacter aurescens (Arthrobacter aurescens).